The sequence spans 261 residues: tRNA pseudouridine synthase A (261 aa).

Asp51 acts as the Nucleophile in catalysis. Residue Tyr109 coordinates substrate.

Belongs to the tRNA pseudouridine synthase TruA family. As to quaternary structure, homodimer.

The catalysed reaction is uridine(38/39/40) in tRNA = pseudouridine(38/39/40) in tRNA. In terms of biological role, formation of pseudouridine at positions 38, 39 and 40 in the anticodon stem and loop of transfer RNAs. The protein is tRNA pseudouridine synthase A of Haemophilus ducreyi (strain 35000HP / ATCC 700724).